Consider the following 154-residue polypeptide: Myoglobin (154 aa).

The Globin domain occupies 2–148; that stretch reads GLSDGEWQLV…FRNEMAAQYK (147 aa). Residue Ser4 is modified to Phosphoserine. Residue His65 coordinates nitrite. O2 is bound at residue His65. A Phosphothreonine modification is found at Thr68. His94 contributes to the heme b binding site.

In terms of assembly, monomeric.

It localises to the cytoplasm. The protein localises to the sarcoplasm. It catalyses the reaction Fe(III)-heme b-[protein] + nitric oxide + H2O = Fe(II)-heme b-[protein] + nitrite + 2 H(+). The enzyme catalyses H2O2 + AH2 = A + 2 H2O. Its function is as follows. Monomeric heme protein which primary function is to store oxygen and facilitate its diffusion within muscle tissues. Reversibly binds oxygen through a pentacoordinated heme iron and enables its timely and efficient release as needed during periods of heightened demand. Depending on the oxidative conditions of tissues and cells, and in addition to its ability to bind oxygen, it also has a nitrite reductase activity whereby it regulates the production of bioactive nitric oxide. Under stress conditions, like hypoxia and anoxia, it also protects cells against reactive oxygen species thanks to its pseudoperoxidase activity. The sequence is that of Myoglobin from Bubalus bubalis (Domestic water buffalo).